The chain runs to 542 residues: Cytochrome P450 79B1 (542 aa).

The helical transmembrane segment at 21–41 (FSNMYLLTTLQAFVAITLVML) threads the bilayer. Cys-478 provides a ligand contact to heme.

Belongs to the cytochrome P450 family. The cofactor is heme.

The protein resides in the membrane. In terms of biological role, converts tyrosine to para-hydrophenylacetaldoxime in para-hydroxybenzylglucosinolate biosynthesis. The polypeptide is Cytochrome P450 79B1 (CYP79B1) (Sinapis alba (White mustard)).